Here is a 202-residue protein sequence, read N- to C-terminus: Small ribosomal subunit protein uS5 (202 aa).

One can recognise an S5 DRBM domain in the interval 50-113 (LKQEILNINV…REAKLNLTPV (64 aa)).

This sequence belongs to the universal ribosomal protein uS5 family. Part of the 30S ribosomal subunit. Contacts protein S4.

Functionally, with S4 and S12 plays an important role in translational accuracy. The polypeptide is Small ribosomal subunit protein uS5 (Pyrobaculum islandicum (strain DSM 4184 / JCM 9189 / GEO3)).